Reading from the N-terminus, the 405-residue chain is Cysteine desulfurase IscS (405 aa).

Pyridoxal 5'-phosphate is bound by residues 75-76 (AT), Asn155, Gln183, and 203-205 (SGH). An N6-(pyridoxal phosphate)lysine modification is found at Lys206. Position 243 (Thr243) interacts with pyridoxal 5'-phosphate. Cys329 functions as the Cysteine persulfide intermediate in the catalytic mechanism. Cys329 contacts [2Fe-2S] cluster.

It belongs to the class-V pyridoxal-phosphate-dependent aminotransferase family. NifS/IscS subfamily. As to quaternary structure, homodimer. Forms a heterotetramer with IscU, interacts with other sulfur acceptors. The cofactor is pyridoxal 5'-phosphate.

The protein localises to the cytoplasm. It catalyses the reaction (sulfur carrier)-H + L-cysteine = (sulfur carrier)-SH + L-alanine. The protein operates within cofactor biosynthesis; iron-sulfur cluster biosynthesis. Functionally, master enzyme that delivers sulfur to a number of partners involved in Fe-S cluster assembly, tRNA modification or cofactor biosynthesis. Catalyzes the removal of elemental sulfur atoms from cysteine to produce alanine. Functions as a sulfur delivery protein for Fe-S cluster synthesis onto IscU, an Fe-S scaffold assembly protein, as well as other S acceptor proteins. The chain is Cysteine desulfurase IscS from Pseudoalteromonas translucida (strain TAC 125).